We begin with the raw amino-acid sequence, 426 residues long: Protein CgeD (426 aa).

The protein to B.subtilis spore coat polysaccharide biosynthesis protein SpsA.

Functionally, may be involved in maturation of the outermost layer of the spore. This is Protein CgeD (cgeD) from Bacillus subtilis (strain 168).